The sequence spans 152 residues: Nucleoside diphosphate kinase (152 aa).

ATP contacts are provided by K11, F59, R87, T93, R104, and N114. The active-site Pros-phosphohistidine intermediate is H117.

It belongs to the NDK family. As to quaternary structure, homotetramer. The cofactor is Mg(2+).

Its subcellular location is the cytoplasm. It carries out the reaction a 2'-deoxyribonucleoside 5'-diphosphate + ATP = a 2'-deoxyribonucleoside 5'-triphosphate + ADP. The enzyme catalyses a ribonucleoside 5'-diphosphate + ATP = a ribonucleoside 5'-triphosphate + ADP. Major role in the synthesis of nucleoside triphosphates other than ATP. The ATP gamma phosphate is transferred to the NDP beta phosphate via a ping-pong mechanism, using a phosphorylated active-site intermediate. The protein is Nucleoside diphosphate kinase of Prochlorococcus marinus (strain MIT 9313).